The following is a 569-amino-acid chain: Glutamate--tRNA ligase (569 aa).

The 'HIGH' region signature appears at 99 to 109; the sequence is PEPNGYPTLGH.

It belongs to the class-I aminoacyl-tRNA synthetase family. Glutamate--tRNA ligase type 2 subfamily.

It is found in the cytoplasm. The catalysed reaction is tRNA(Glu) + L-glutamate + ATP = L-glutamyl-tRNA(Glu) + AMP + diphosphate. Catalyzes the attachment of glutamate to tRNA(Glu) in a two-step reaction: glutamate is first activated by ATP to form Glu-AMP and then transferred to the acceptor end of tRNA(Glu). The chain is Glutamate--tRNA ligase from Korarchaeum cryptofilum (strain OPF8).